The sequence spans 361 residues: Histidinol-phosphate aminotransferase (361 aa).

Residue lysine 219 is modified to N6-(pyridoxal phosphate)lysine.

It belongs to the class-II pyridoxal-phosphate-dependent aminotransferase family. Histidinol-phosphate aminotransferase subfamily. In terms of assembly, homodimer. Pyridoxal 5'-phosphate serves as cofactor.

It catalyses the reaction L-histidinol phosphate + 2-oxoglutarate = 3-(imidazol-4-yl)-2-oxopropyl phosphate + L-glutamate. Its pathway is amino-acid biosynthesis; L-histidine biosynthesis; L-histidine from 5-phospho-alpha-D-ribose 1-diphosphate: step 7/9. The sequence is that of Histidinol-phosphate aminotransferase from Acinetobacter baumannii (strain SDF).